The following is a 406-amino-acid chain: MKTLNETTQQSTRAGRYGKDFGGQYIPETLMTELEKVTKAFNDLKDNPEFKAELNDLLVNYANRPSLLYYAKNMTEDLGGAKIYLKREDLNHTGAHKINNVIGQALLAKHLGKKRLIAETGAGQHGVATATIAALMGMDCEIFMGKEDTDRQKLNVYRMELLGAKVHPVTSGSMVLKDAVNATLQEWASRSDDTFYVLGSAVGPAPFPEMVKHFQSVISTESKQQLQAKETRLPDMVVACVGGGSNAIGSFAAYIDDPSVQLVGVEAAGKGVDTDRTAATIERGSVGIFHGMKSLFMQNEDGQIDPVYSISAGLDYPGVGPEHAALAQEGRAQYVGITDDEAVEAFTYIAKQEGIVAAIESCHAIAYVEKIAPQMAKDQIIICTLSGRGDKDVASIAKYKGVDVDE.

Position 97 is an N6-(pyridoxal phosphate)lysine (Lys-97).

It belongs to the TrpB family. As to quaternary structure, tetramer of two alpha and two beta chains. Requires pyridoxal 5'-phosphate as cofactor.

The catalysed reaction is (1S,2R)-1-C-(indol-3-yl)glycerol 3-phosphate + L-serine = D-glyceraldehyde 3-phosphate + L-tryptophan + H2O. It functions in the pathway amino-acid biosynthesis; L-tryptophan biosynthesis; L-tryptophan from chorismate: step 5/5. Functionally, the beta subunit is responsible for the synthesis of L-tryptophan from indole and L-serine. The protein is Tryptophan synthase beta chain of Lacticaseibacillus casei (strain BL23) (Lactobacillus casei).